The following is a 456-amino-acid chain: RuvB-like helicase 1 (456 aa).

70 to 77 is an ATP binding site; the sequence is GPPGTGKT.

The protein belongs to the RuvB family. In terms of assembly, forms homohexameric rings. May form a dodecamer with rept made of two stacked hexameric rings. Component of the chromatin remodeling Ino80 complex.

It localises to the nucleus. The enzyme catalyses ATP + H2O = ADP + phosphate + H(+). In terms of biological role, acts as a transcriptional coactivator in Wg signaling caused by altered arm signaling. Pont and rept interfere antagonistically with nuclear arm signaling function, and are required to enhance or reduce arm activity, respectively. Also an essential cofactor for the normal function of Myc; required for cellular proliferation and growth. Proposed core component of the chromatin remodeling Ino80 complex which is involved in transcriptional regulation, DNA replication and probably DNA repair. This Drosophila pseudoobscura pseudoobscura (Fruit fly) protein is RuvB-like helicase 1.